The following is a 165-amino-acid chain: Myosin regulatory light chain 2B, cardiac muscle isoform (165 aa).

The residue at position 2 (A2) is a N,N,N-trimethylalanine. EF-hand domains lie at T23–L58, D93–R128, and F129–K164. The Ca(2+) site is built by D36, N38, D40, and D47.

Myosin is a hexamer of 2 heavy chains and 4 light chains. Post-translationally, the N-terminus is blocked. N,N,N-trimethylalanine, found in other myosin light chains would not have been detected in the N-terminal tryptic peptide in PubMed:7319048 because it would remain trimethylated and ninhydrin negative after hydrolysis.

The chain is Myosin regulatory light chain 2B, cardiac muscle isoform from Gallus gallus (Chicken).